The following is a 261-amino-acid chain: Thioesterase frbD (261 aa).

The protein belongs to the AMT4 thioesterase family.

Its pathway is antifungal biosynthesis. Its function is as follows. Thioesterase; part of the gene cluster that mediates the biosynthesis of the antifungal antibiotic FR901469, an inhibitor of beta-1,3-glucansynthase, exerting antifungal activity against the pathogenes Candida albicans and Aspergillus fumigatus. FR901469 is a cyclic depsipeptide containing 12 amino acid residues and a fatty acid chain. The NRPS frbI contains 12 modules responsible for the formation of the depsipeptide backbone which is denoted as Acyl-Thr-Ala-Tyr-Val-4OHPro-Thr-Thr-3OHPro-threo3OHGln-Gly-Thr-Orn-OH (C71H116N14O23). The PKS frbB is probably involved in the production of the hydrocarbon chain, and the acyl-CoA ligase frbC might be involved in the transport of the chain to the peptide ptoduct of frbI. Because FR901469 contains 3 hydroxylated amino acid residues, the 3 oxygenases frbA, frbH, and frbJ might be participating in amino acid hydroxylation. As no thioesterase domains were detected in frbI or frbB, the thioesterases frbD and frbE may instead release and cyclize the products of the NRPS and PKS, respectively. This Dothideomycetidae sp. (strain 11243) (Fungal sp. (strain No.11243)) protein is Thioesterase frbD.